The following is a 228-amino-acid chain: MDHGRLMDDQMMLGSQVYPYTTQPQNSHCIIVNQIDGGEESKPVKRRRKRRSKGSSATNEEDVAEIGGMLRKRKLTDEQVNMLEYSFGNEHKLESGRKEKIAGELGLDPRQVAVWFQNRRARWKNKKLEEEYAKLKNHHDNVVLGQCQLESQILKLTEQLSEAQSEIRKLSERLEEMPTNSSSSSLSVEANNAPTDFELAPETNYNIPFYMLDNNYLQSMEYWDGLYV.

The segment at 36-62 (DGGEESKPVKRRRKRRSKGSSATNEED) is disordered. Over residues 44–53 (VKRRRKRRSK) the composition is skewed to basic residues. The homeobox DNA-binding region spans 68-127 (GMLRKRKLTDEQVNMLEYSFGNEHKLESGRKEKIAGELGLDPRQVAVWFQNRRARWKNKK). The interval 128–156 (LEEEYAKLKNHHDNVVLGQCQLESQILKL) is leucine-zipper.

The protein belongs to the HD-ZIP homeobox family. Class I subfamily. Expressed in root meristem, late flowers and siliques.

The protein localises to the nucleus. Functionally, probable transcription factor that may play a regulatory role in auxin/cytokinin signaling during root development. This Arabidopsis thaliana (Mouse-ear cress) protein is Homeobox-leucine zipper protein ATHB-53 (ATHB-53).